Consider the following 847-residue polypeptide: Phenylalanine--tRNA ligase beta subunit (847 aa).

Positions 40–168 (FGIEGPVVVG…LDPEVGADAV (129 aa)) constitute a tRNA-binding domain. The B5 domain occupies 426–501 (ADAEPIRLPD…RIVGFDRIPS (76 aa)). Residues aspartate 479, aspartate 485, glutamate 488, and glutamate 489 each contribute to the Mg(2+) site. Residues 753–846 (AGFPAATQDL…AGQLFGAAIR (94 aa)) enclose the FDX-ACB domain.

Belongs to the phenylalanyl-tRNA synthetase beta subunit family. Type 1 subfamily. Tetramer of two alpha and two beta subunits. Mg(2+) serves as cofactor.

Its subcellular location is the cytoplasm. It catalyses the reaction tRNA(Phe) + L-phenylalanine + ATP = L-phenylalanyl-tRNA(Phe) + AMP + diphosphate + H(+). The polypeptide is Phenylalanine--tRNA ligase beta subunit (Leifsonia xyli subsp. xyli (strain CTCB07)).